The chain runs to 222 residues: Recombination protein RecR (222 aa).

The C4-type zinc finger occupies 57 to 72 (CPVCFNITDAERCDVC). Residues 80 to 173 (SVICVVEEPG…VVSRIAYGLP (94 aa)) enclose the Toprim domain. Residues 189-222 (ALSGRRRVSEPASPPPPRRNDEEQDGAPARPPSH) are disordered.

It belongs to the RecR family.

In terms of biological role, may play a role in DNA repair. It seems to be involved in an RecBC-independent recombinational process of DNA repair. It may act with RecF and RecO. The protein is Recombination protein RecR of Deinococcus geothermalis (strain DSM 11300 / CIP 105573 / AG-3a).